Here is a 406-residue protein sequence, read N- to C-terminus: Probable 2,3-bisphosphoglycerate-independent phosphoglycerate mutase (406 aa).

The protein belongs to the BPG-independent phosphoglycerate mutase family. A-PGAM subfamily.

The enzyme catalyses (2R)-2-phosphoglycerate = (2R)-3-phosphoglycerate. It functions in the pathway carbohydrate degradation; glycolysis; pyruvate from D-glyceraldehyde 3-phosphate: step 3/5. Catalyzes the interconversion of 2-phosphoglycerate and 3-phosphoglycerate. In Thermus thermophilus (strain ATCC 27634 / DSM 579 / HB8), this protein is Probable 2,3-bisphosphoglycerate-independent phosphoglycerate mutase.